The chain runs to 223 residues: Probable cell wall protein PGA61 (223 aa).

Residues 1–16 (MKSGLLLAVILPVAFA) form the signal peptide. An N-linked (GlcNAc...) asparagine glycan is attached at N25. Residues 83–134 (GAPSSSSTPTSSTETTSSTEAETTEAETTEQPSSSTSSNTESSKTTILETPS) form a disordered region. 2 stretches are compositionally biased toward low complexity: residues 84 to 103 (APSS…STEA) and 111 to 128 (TEQP…SKTT). N188 is a glycosylation site (N-linked (GlcNAc...) asparagine). N202 carries GPI-anchor amidated asparagine lipidation. Positions 203–223 (GAGRAAVIGSGSLLALLLNFI) are cleaved as a propeptide — removed in mature form.

It belongs to the IHD1 family. The GPI-anchor is attached to the protein in the endoplasmic reticulum and serves to target the protein to the cell surface. There, the glucosamine-inositol phospholipid moiety is cleaved off and the GPI-modified mannoprotein is covalently attached via its lipidless GPI glycan remnant to the 1,6-beta-glucan of the outer cell wall layer.

It is found in the secreted. The protein resides in the cell wall. It localises to the membrane. Its function is as follows. Probable GPI-anchored cell wall protein that may be involved in cell wall organization, hyphal growth, as well as in virulence. The sequence is that of Probable cell wall protein PGA61 (PGA61) from Candida albicans (strain SC5314 / ATCC MYA-2876) (Yeast).